A 260-amino-acid polypeptide reads, in one-letter code: Transcriptional activator protein AsaR (260 aa).

In terms of domain architecture, HTH luxR-type spans Glu-176–Gly-241. Residues Ser-200–Asn-219 constitute a DNA-binding region (H-T-H motif).

It belongs to the autoinducer-regulated transcriptional regulatory protein family.

In terms of biological role, functions as a BHL-responsive transcriptional regulator. In Aeromonas salmonicida, this protein is Transcriptional activator protein AsaR.